Here is a 259-residue protein sequence, read N- to C-terminus: L-cysteine S-thiosulfotransferase subunit SoxA (259 aa).

The first 23 residues, 1–23 (MRKLWFLPILLGAVGGVSLYAIA), serve as a signal peptide directing secretion. The Cytochrome c domain occupies 50–135 (VYAEQGRDMF…SIATYVATLS (86 aa)). Residues Cys70, Cys73, His74, Cys108, Cys171, Cys174, and His175 each contribute to the heme c site. Arg216 serves as a coordination point for substrate. Cys220 contributes to the heme c binding site. Cys220 (cysteine persulfide intermediate) is an active-site residue.

The protein belongs to the SoxA family. As to quaternary structure, heterodimer of SoxA and SoxX. The cofactor is heme c. In terms of processing, cysteine persulfide at Cys-220.

The protein localises to the periplasm. It catalyses the reaction L-cysteinyl-[SoxY protein] + thiosulfate + 2 Fe(III)-[cytochrome c] = S-sulfosulfanyl-L-cysteinyl-[SoxY protein] + 2 Fe(II)-[cytochrome c] + 2 H(+). It carries out the reaction S-sulfanyl-L-cysteinyl-[SoxY protein] + thiosulfate + 2 Fe(III)-[cytochrome c] = S-(2-sulfodisulfanyl)-L-cysteinyl-[SoxY protein] + 2 Fe(II)-[cytochrome c] + 2 H(+). Its function is as follows. C-type diheme cytochrome, which is part of the SoxAX cytochrome complex involved in sulfur oxidation. The SoxAX complex catalyzes the formation of a heterodisulfide bond between the conserved cysteine residue on a sulfur carrier SoxYZ complex subunit SoxY and thiosulfate or other inorganic sulfur substrates. This leads to the liberation of two electrons, which may be transferred from the SoxAX complex to another cytochrome c that then channels them into the respiratory electron transport chain. Some electrons may be used for reductive CO(2) fixation. The chain is L-cysteine S-thiosulfotransferase subunit SoxA from Hydrogenobacter thermophilus (strain DSM 6534 / IAM 12695 / TK-6).